We begin with the raw amino-acid sequence, 686 residues long: Secretin GspD 2 (686 aa).

Positions 1 to 40 (MFWRDITLSVWRKKTTGLKTKKRLLPLVLAAALCSSPVWA) are cleaved as a signal peptide. The interval 41-140 (EEATFTANFK…VGEGSDNYAG (100 aa)) is N0, contacts GspC2. An N1 region spans residues 142–206 (EMVTKVVPVR…EVIQRVDHAG (65 aa)). The segment at 207–279 (NRTEEVIPLD…LIRRLDSEME (73 aa)) is N2. An N3 region spans residues 282–357 (GNSQVFYLKY…SLQSVIEQLD (76 aa)). A secretin region spans residues 360 to 627 (RAQVHVEALI…VFIRPTILRD (268 aa)). Positions 414–433 (PQKGSTVISENGATTINPDT) are cap gate. The interval 629–686 (MAADGVSQRKYNYMRAEQIYRDEQGLSLMPHTAQPVLPAQNQALPPEVRAFLNAGRTR) is s domain, contacts AspS2.

This sequence belongs to the bacterial secretin family. GSP D subfamily. Forms a cylindrical channel with 15 subunits, each of which interacts with the surrounding pilotin AspS2 proteins (also called GspS-beta). Interacts with inner cell membrane protein GspC2 in the periplasm. Forms multimers in the outer membrane. The isolated N0 domain forms dimers that self-assemble into rings.

It is found in the cell outer membrane. Its function is as follows. Part of a type II secretion system (T2SS, formerly general secretion pathway, GSP) for the export of folded proteins across the outer membrane. This subunit forms the outer membrane channel. This Escherichia coli O78:H11 (strain H10407 / ETEC) protein is Secretin GspD 2 (gspD2).